A 351-amino-acid polypeptide reads, in one-letter code: MALPFQKELEKYKNIDEDELLGKLSEEELKQLENVLDDLDPESAMLPAGFRQKDQTQKAATGPFDREHLLMYLEKEALEQKDREDFVPFTGEKKGRVFIPKEKPIETRKEEKVTLDPELEEALASASDTELYDLAAVLGVHNLLNNPKFDEETANNKGGKGPVRNVVKGEKVKPVFEEPPNPTNVEISLQQMKANDPSLQEVNLNNIKNIPIPTLREFAKALETNTHVKKFSLAATRSNDPVAIAFADMLKVNKTLTSLNIESNFITGTGILALVEALKENDTLTEIKIDNQRQQLGTAVEMEIAQMLEENSRILKFGYQFTKQGPRTRVAAAITKNNDLVRKKRVEADRR.

Residue S25 is modified to Phosphoserine.

It belongs to the tropomodulin family. In terms of assembly, binds to the N-terminus of tropomyosin and to actin. Neuronal-tissue specific.

It is found in the cytoplasm. The protein localises to the cytoskeleton. In terms of biological role, blocks the elongation and depolymerization of the actin filaments at the pointed end. The Tmod/TM complex contributes to the formation of the short actin protofilament, which in turn defines the geometry of the membrane skeleton. This Homo sapiens (Human) protein is Tropomodulin-2 (TMOD2).